Reading from the N-terminus, the 266-residue chain is Indole-3-glycerol phosphate synthase (266 aa).

Belongs to the TrpC family.

It carries out the reaction 1-(2-carboxyphenylamino)-1-deoxy-D-ribulose 5-phosphate + H(+) = (1S,2R)-1-C-(indol-3-yl)glycerol 3-phosphate + CO2 + H2O. The protein operates within amino-acid biosynthesis; L-tryptophan biosynthesis; L-tryptophan from chorismate: step 4/5. In Variovorax paradoxus (strain S110), this protein is Indole-3-glycerol phosphate synthase.